The following is a 290-amino-acid chain: Chloride intracellular channel exc-4 (290 aa).

The helical transmembrane segment at 37–57 (LFCQEFWMELYALYEIGVARV) threads the bilayer.

Belongs to the chloride channel CLIC family. Monomer. Expressed in the secretory system, hypodermis, vulva, pharyngeal muscle, rectal gland, tubular rectal epithelium cells, and tubular neuronal support cells in the head and tail.

The protein resides in the cytoplasm. The protein localises to the membrane. Its function is as follows. May insert into membranes and form chloride ion channels. Involved in the formation of the excretory canal. Required to prevent cystic lumenal expansions in the excretory cell. Not required for formation of the initial tube, but is required for regulating the size of the tube lumen as it grows. This is Chloride intracellular channel exc-4 (exc-4) from Caenorhabditis elegans.